Reading from the N-terminus, the 124-residue chain is Small ribosomal subunit protein uS13 (124 aa).

The segment at 94-124 is disordered; it reads KGLPVRGQRTKTNARTRKGPKRTVAGKKKAR.

This sequence belongs to the universal ribosomal protein uS13 family. As to quaternary structure, part of the 30S ribosomal subunit. Forms a loose heterodimer with protein S19. Forms two bridges to the 50S subunit in the 70S ribosome.

In terms of biological role, located at the top of the head of the 30S subunit, it contacts several helices of the 16S rRNA. In the 70S ribosome it contacts the 23S rRNA (bridge B1a) and protein L5 of the 50S subunit (bridge B1b), connecting the 2 subunits; these bridges are implicated in subunit movement. Contacts the tRNAs in the A and P-sites. In Pseudarthrobacter chlorophenolicus (strain ATCC 700700 / DSM 12829 / CIP 107037 / JCM 12360 / KCTC 9906 / NCIMB 13794 / A6) (Arthrobacter chlorophenolicus), this protein is Small ribosomal subunit protein uS13.